A 440-amino-acid polypeptide reads, in one-letter code: MVKVGFVSLGCNKNLVDSEIMMGACKEAGFEITPNAEDADVIVINTCGFINDAKQESIDTILEMAEYKNKKCKFLIVTGCLSQRYKDDILKELPEVDAILGVKEMLKLPNVIKKLYEGESKLQVFDDKPTFVYTSSMPRLIATPKFYAYIKIAEGCNNRCSYCSIPLIRGNYTSRYIDDIIQEARKLSEDGYKEIVLTAQDTTKYGIDIYQKKMLATLLQKLSEIDNIKWIRFLYSYPEDIDDELLNIVKSLPKVVKYFDIPIQHINNRILKLMNRKTSSEGIKELIQRIRSAFDEVVIRTTVMVGFPTESEDEFEELYEFVKWAKFDRLGAFMYSQEEGTPAADLPQTDDETKVKRYERILNLQRKISLERNRKRISKKYEVVIEGRDRNNFYIARSQFEAPEVDGKIIVFSKRKLLPGEFVVVKILDAFEYDLVGEVI.

The region spanning Val-2 to Glu-117 is the MTTase N-terminal domain. Positions 11, 47, 80, 156, 160, and 163 each coordinate [4Fe-4S] cluster. The Radical SAM core domain maps to Ala-142–Glu-371. The TRAM domain occupies Arg-374 to Ile-440.

It belongs to the methylthiotransferase family. RimO subfamily. The cofactor is [4Fe-4S] cluster.

The protein localises to the cytoplasm. It carries out the reaction L-aspartate(89)-[ribosomal protein uS12]-hydrogen + (sulfur carrier)-SH + AH2 + 2 S-adenosyl-L-methionine = 3-methylsulfanyl-L-aspartate(89)-[ribosomal protein uS12]-hydrogen + (sulfur carrier)-H + 5'-deoxyadenosine + L-methionine + A + S-adenosyl-L-homocysteine + 2 H(+). Its function is as follows. Catalyzes the methylthiolation of an aspartic acid residue of ribosomal protein uS12. This Caldicellulosiruptor saccharolyticus (strain ATCC 43494 / DSM 8903 / Tp8T 6331) protein is Ribosomal protein uS12 methylthiotransferase RimO.